Reading from the N-terminus, the 240-residue chain is Mannose-binding protein C (240 aa).

Positions 1–18 (MSLFPSLHLLLLIVMTAS) are cleaved as a signal peptide. Collagen-like domains are found at residues 39–61 (SPGINGLPGKDGLDGAKGEKGEP) and 67–97 (GLQGLPGMVGPQGSPGIPGLPGLKGQKGDSG). Pro46 is modified (hydroxyproline). The segment at 48–102 (KDGLDGAKGEKGEPGQGLIGLQGLPGMVGPQGSPGIPGLPGLKGQKGDSGIDPGN) is disordered. Over residues 49–60 (DGLDGAKGEKGE) the composition is skewed to basic and acidic residues. A hydroxyproline mark is found at Pro72, Pro81, and Pro87. A coiled-coil region spans residues 104–122 (LANLRSELDNIKKWLIFAQ). Residues 126–237 (VGKKLYLTNG…CSSQLSAVCE (112 aa)) form the C-type lectin domain. Cystine bridges form between Cys147–Cys236 and Cys214–Cys228.

As to quaternary structure, interacts with MASP1 and MASP2. Interacts with MEP1A and MEP1B and may inhibit their catalytic activity. Forms oligomeric complexes of 2 or 3 homotrimers. As to expression, expressed in liver. Weakly expressed in kidney and testis.

It is found in the secreted. In terms of biological role, calcium-dependent lectin involved in innate immune defense. Binds mannose, fucose and N-acetylglucosamine on different microorganisms and activates the lectin complement pathway. Binds to late apoptotic cells, as well as to apoptotic blebs and to necrotic cells, but not to early apoptotic cells, facilitating their uptake by macrophages. According to some authors, it only binds mannose. The sequence is that of Mannose-binding protein C from Sus scrofa (Pig).